The chain runs to 484 residues: uncharacterized protein (484 aa).

To M.thermoautotrophicum MTH1153.

This is an uncharacterized protein from Methanocaldococcus jannaschii (strain ATCC 43067 / DSM 2661 / JAL-1 / JCM 10045 / NBRC 100440) (Methanococcus jannaschii).